The primary structure comprises 210 residues: Vacuolar protein sorting-associated protein 28 homolog (210 aa).

In terms of domain architecture, VPS28 N-terminal spans 1-106 (MSSQNANLMR…REGRPITVKD (106 aa)). The VPS28 C-terminal domain maps to 110 to 206 (NVLKHIASIV…AYQAFNKALN (97 aa)).

Belongs to the VPS28 family. In terms of assembly, component of the ESCRT-I complex (endosomal sorting complex required for transport I). In terms of tissue distribution, expressed in embryos.

It is found in the endosome. Functionally, component of the ESCRT-I complex, a regulator of vesicular trafficking process. The polypeptide is Vacuolar protein sorting-associated protein 28 homolog (vps-28) (Caenorhabditis elegans).